The sequence spans 116 residues: Flagellar transcriptional regulator FlhD (116 aa).

Belongs to the FlhD family. As to quaternary structure, homodimer; disulfide-linked. Forms a heterohexamer composed of two FlhC and four FlhD subunits. Each FlhC binds a FlhD dimer, forming a heterotrimer, and a hexamer assembles by dimerization of two heterotrimers.

The protein resides in the cytoplasm. Functions in complex with FlhC as a master transcriptional regulator that regulates transcription of several flagellar and non-flagellar operons by binding to their promoter region. Activates expression of class 2 flagellar genes, including fliA, which is a flagellum-specific sigma factor that turns on the class 3 genes. Also regulates genes whose products function in a variety of physiological pathways. This is Flagellar transcriptional regulator FlhD from Enterobacter sp. (strain 22).